A 122-amino-acid polypeptide reads, in one-letter code: Small ribosomal subunit protein uS12c (122 aa).

The protein belongs to the universal ribosomal protein uS12 family. In terms of assembly, part of the 30S ribosomal subunit.

The protein localises to the plastid. Its subcellular location is the chloroplast. Functionally, with S4 and S5 plays an important role in translational accuracy. Located at the interface of the 30S and 50S subunits. The chain is Small ribosomal subunit protein uS12c (rps12) from Cyanidioschyzon merolae (strain NIES-3377 / 10D) (Unicellular red alga).